Consider the following 65-residue polypeptide: Large ribosomal subunit protein bL35 (65 aa).

The disordered stretch occupies residues 1 to 65 (MPKMKTNRAA…GRLDRMLPYL (65 aa)). Over residues 10-44 (AAKRFRKTASGKYKAGHANRSHILTKKATKRKRNL) the composition is skewed to basic residues. The segment covering 50–65 (VRAEDAGRLDRMLPYL) has biased composition (basic and acidic residues).

This sequence belongs to the bacterial ribosomal protein bL35 family.

The sequence is that of Large ribosomal subunit protein bL35 from Xylella fastidiosa (strain M12).